The sequence spans 643 residues: Hypoxia up-regulated protein 1 (643 aa).

Positions 1-22 (MRPLVCVFTMFLLALLSSNTES) are cleaved as a signal peptide. Residues 565-643 (LGNTISSLFG…EEEKSEPQEE (79 aa)) form a disordered region. Positions 590–610 (VQEEDEVPTEPTKEEEQESAD) are enriched in acidic residues. Basic and acidic residues-rich tracts occupy residues 611–621 (AADKQKDKEKG) and 630–643 (EGKK…PQEE).

The protein belongs to the heat shock protein 70 family.

The protein resides in the endoplasmic reticulum lumen. Has a pivotal role in cytoprotective cellular mechanisms triggered by oxygen deprivation. May play a role as a molecular chaperone and participate in protein folding. The protein is Hypoxia up-regulated protein 1 (hyou1) of Xenopus tropicalis (Western clawed frog).